Here is a 621-residue protein sequence, read N- to C-terminus: tRNA uridine 5-carboxymethylaminomethyl modification enzyme MnmG (621 aa).

9 to 14 (GGGHAG) lines the FAD pocket. 270-284 (GPRYCPSIEDKIVKF) provides a ligand contact to NAD(+).

It belongs to the MnmG family. In terms of assembly, homodimer. Heterotetramer of two MnmE and two MnmG subunits. It depends on FAD as a cofactor.

The protein localises to the cytoplasm. Its function is as follows. NAD-binding protein involved in the addition of a carboxymethylaminomethyl (cmnm) group at the wobble position (U34) of certain tRNAs, forming tRNA-cmnm(5)s(2)U34. The chain is tRNA uridine 5-carboxymethylaminomethyl modification enzyme MnmG from Borreliella afzelii (strain PKo) (Borrelia afzelii).